A 418-amino-acid chain; its full sequence is Aspartate aminotransferase, cytoplasmic (418 aa).

At serine 2 the chain carries N-acetylserine. Residues glycine 38, tryptophan 135, and asparagine 188 each coordinate L-aspartate. Position 255 is an N6-(pyridoxal phosphate)lysine (lysine 255). Arginine 387 contacts L-aspartate. The residue at position 389 (serine 389) is a Phosphoserine.

It belongs to the class-I pyridoxal-phosphate-dependent aminotransferase family. As to quaternary structure, homodimer. It depends on pyridoxal 5'-phosphate as a cofactor.

It localises to the cytoplasm. The protein localises to the peroxisome. The catalysed reaction is L-aspartate + 2-oxoglutarate = oxaloacetate + L-glutamate. Plays a key role in amino acid metabolism. The chain is Aspartate aminotransferase, cytoplasmic (AAT2) from Saccharomyces cerevisiae (strain ATCC 204508 / S288c) (Baker's yeast).